The following is a 92-amino-acid chain: Small ribosomal subunit protein uS19 (92 aa).

The protein belongs to the universal ribosomal protein uS19 family.

Protein S19 forms a complex with S13 that binds strongly to the 16S ribosomal RNA. The protein is Small ribosomal subunit protein uS19 of Bartonella bacilliformis (strain ATCC 35685 / KC583 / Herrer 020/F12,63).